The primary structure comprises 180 residues: Large ribosomal subunit protein uL5c (180 aa).

It belongs to the universal ribosomal protein uL5 family. As to quaternary structure, part of the 50S ribosomal subunit; contacts the 5S rRNA.

Its subcellular location is the plastid. The protein localises to the chloroplast. In terms of biological role, binds 5S rRNA, forms part of the central protuberance of the 50S subunit. This is Large ribosomal subunit protein uL5c (rpl5) from Stigeoclonium helveticum (Green alga).